Here is a 274-residue protein sequence, read N- to C-terminus: Thiazole synthase (274 aa).

Lys115 functions as the Schiff-base intermediate with DXP in the catalytic mechanism. Residues Gly176, 202–203 (AG), and 224–225 (NS) contribute to the 1-deoxy-D-xylulose 5-phosphate site.

This sequence belongs to the ThiG family. Homotetramer. Forms heterodimers with either ThiH or ThiS.

It is found in the cytoplasm. It carries out the reaction [ThiS sulfur-carrier protein]-C-terminal-Gly-aminoethanethioate + 2-iminoacetate + 1-deoxy-D-xylulose 5-phosphate = [ThiS sulfur-carrier protein]-C-terminal Gly-Gly + 2-[(2R,5Z)-2-carboxy-4-methylthiazol-5(2H)-ylidene]ethyl phosphate + 2 H2O + H(+). It participates in cofactor biosynthesis; thiamine diphosphate biosynthesis. Functionally, catalyzes the rearrangement of 1-deoxy-D-xylulose 5-phosphate (DXP) to produce the thiazole phosphate moiety of thiamine. Sulfur is provided by the thiocarboxylate moiety of the carrier protein ThiS. In vitro, sulfur can be provided by H(2)S. The protein is Thiazole synthase of Parasynechococcus marenigrum (strain WH8102).